The following is a 365-amino-acid chain: Pre-mRNA-splicing factor srp2 (365 aa).

2 consecutive RRM domains span residues 6 to 69 and 100 to 166; these read LFVG…RIVV and LIVE…AVTL. The tract at residues 166–365 is disordered; the sequence is LREDPDAANE…SAEGQVAAEW (200 aa). Positions 184–194 are enriched in basic residues; it reads FRSRSPPARRR. S186, S188, S276, S294, S296, S298, and S308 each carry phosphoserine. Residues 195-307 show a composition bias toward basic and acidic residues; the sequence is YRDDYRRGGD…SPRRDREENR (113 aa). A compositionally biased stretch (low complexity) spans 316 to 332; that stretch reads SYSAAPEASMESSAPTE. Residues 341–353 are compositionally biased toward polar residues; it reads EEQQPLQNHSDVG.

This sequence belongs to the splicing factor SR family. Post-translationally, extensively phosphorylated on serine residues in the RS domain.

The protein resides in the nucleus. In terms of biological role, has a role in pre-mRNA splicing where it is involved in spliceosome assembly. This chain is Pre-mRNA-splicing factor srp2 (srp2), found in Schizosaccharomyces pombe (strain 972 / ATCC 24843) (Fission yeast).